We begin with the raw amino-acid sequence, 425 residues long: Serine--tRNA ligase (425 aa).

L-serine is bound at residue 227–229; sequence TAE. ATP contacts are provided by residues 258 to 260 and valine 274; that span reads RRE. Position 281 (glutamate 281) interacts with L-serine. 347 to 350 provides a ligand contact to ATP; it reads ETHS. Threonine 382 is an L-serine binding site.

This sequence belongs to the class-II aminoacyl-tRNA synthetase family. Type-1 seryl-tRNA synthetase subfamily. Homodimer. The tRNA molecule binds across the dimer.

It is found in the cytoplasm. The catalysed reaction is tRNA(Ser) + L-serine + ATP = L-seryl-tRNA(Ser) + AMP + diphosphate + H(+). It carries out the reaction tRNA(Sec) + L-serine + ATP = L-seryl-tRNA(Sec) + AMP + diphosphate + H(+). Its pathway is aminoacyl-tRNA biosynthesis; selenocysteinyl-tRNA(Sec) biosynthesis; L-seryl-tRNA(Sec) from L-serine and tRNA(Sec): step 1/1. In terms of biological role, catalyzes the attachment of serine to tRNA(Ser). Is also able to aminoacylate tRNA(Sec) with serine, to form the misacylated tRNA L-seryl-tRNA(Sec), which will be further converted into selenocysteinyl-tRNA(Sec). This chain is Serine--tRNA ligase, found in Deinococcus radiodurans (strain ATCC 13939 / DSM 20539 / JCM 16871 / CCUG 27074 / LMG 4051 / NBRC 15346 / NCIMB 9279 / VKM B-1422 / R1).